A 76-amino-acid chain; its full sequence is Conotoxin VnMEKL-021 (76 aa).

The signal sequence occupies residues 1–19 (MQKLTILLLVAAVLMSTQA). A propeptide spanning residues 20–37 (LIKGGGEKRPKEKIKFLS) is cleaved from the precursor. 3 disulfide bridges follow: Cys-51-Cys-65, Cys-58-Cys-69, and Cys-64-Cys-73.

Belongs to the conotoxin O2 superfamily. Expressed by the venom duct.

The protein localises to the secreted. In Conus ventricosus (Mediterranean cone), this protein is Conotoxin VnMEKL-021.